The sequence spans 618 residues: Indolepyruvate oxidoreductase subunit IorA (618 aa).

2 consecutive 4Fe-4S ferredoxin-type domains span residues 558 to 587 (GRPM…VTRE) and 588 to 617 (GEVF…PEGK). 8 residues coordinate [4Fe-4S] cluster: cysteine 568, cysteine 571, cysteine 574, cysteine 580, cysteine 597, cysteine 600, cysteine 603, and cysteine 607.

Heterodimer of the IorA and IorB subunits. [4Fe-4S] cluster serves as cofactor.

It carries out the reaction indole-3-pyruvate + 2 oxidized [2Fe-2S]-[ferredoxin] + CoA = (indol-3-yl)acetyl-CoA + 2 reduced [2Fe-2S]-[ferredoxin] + CO2 + H(+). Its function is as follows. Catalyzes the ferredoxin-dependent oxidative decarboxylation of arylpyruvates. This is Indolepyruvate oxidoreductase subunit IorA (iorA) from Methanothermobacter thermautotrophicus (strain ATCC 29096 / DSM 1053 / JCM 10044 / NBRC 100330 / Delta H) (Methanobacterium thermoautotrophicum).